A 443-amino-acid polypeptide reads, in one-letter code: ATP-dependent protease ATPase subunit HslU (443 aa).

ATP-binding positions include isoleucine 18, 60-65 (GVGKTE), aspartate 256, glutamate 321, and arginine 393.

The protein belongs to the ClpX chaperone family. HslU subfamily. A double ring-shaped homohexamer of HslV is capped on each side by a ring-shaped HslU homohexamer. The assembly of the HslU/HslV complex is dependent on binding of ATP.

It is found in the cytoplasm. Its function is as follows. ATPase subunit of a proteasome-like degradation complex; this subunit has chaperone activity. The binding of ATP and its subsequent hydrolysis by HslU are essential for unfolding of protein substrates subsequently hydrolyzed by HslV. HslU recognizes the N-terminal part of its protein substrates and unfolds these before they are guided to HslV for hydrolysis. This is ATP-dependent protease ATPase subunit HslU from Pectobacterium atrosepticum (strain SCRI 1043 / ATCC BAA-672) (Erwinia carotovora subsp. atroseptica).